Consider the following 343-residue polypeptide: Arginine N-succinyltransferase (343 aa).

Leu125 lines the succinyl-CoA pocket. Residue His229 is the Proton donor of the active site.

This sequence belongs to the arginine N-succinyltransferase family.

It carries out the reaction succinyl-CoA + L-arginine = N(2)-succinyl-L-arginine + CoA + H(+). The protein operates within amino-acid degradation; L-arginine degradation via AST pathway; L-glutamate and succinate from L-arginine: step 1/5. In terms of biological role, catalyzes the transfer of succinyl-CoA to arginine to produce N(2)-succinylarginine. This Photorhabdus laumondii subsp. laumondii (strain DSM 15139 / CIP 105565 / TT01) (Photorhabdus luminescens subsp. laumondii) protein is Arginine N-succinyltransferase.